Here is a 474-residue protein sequence, read N- to C-terminus: MTSTAAEGAGSGSLNPPHSNPSGDGGPRIRSPPGKGNKPVALADITNTGKPNAARSITVPDLVKENTKLLTLLNEKTKIIDLSRVEIYKLRLALQASKQQNLHLTQTNSQMLAEINTGKDRIKMLQHELSCTTALLKVKDSELDRKKNAGNVQQKGVKSQVLKTKASTVAVEAHHVGDSVTSGVEHHVVESQSAVSSNTVCQEPPQDGKQKRMPQRRRSSRLNQGSCEIRGVSQNTLHENPVVPVAPSTLSLEKQYGQTTGKHMKSLQNECSATVHEVIMASEFEKTEINELPQKTDLKEIPEACSSETEVQSHKIGDKAFNSKQNHLTGSQSSLSFNTVDTPEPPEDNTVKRCSKKRSSIEDVNAKLDTITSEPLRHEEKRKSRRKISARLNSVSSEHTDIVVETEHKDVIVSLAGSTSNVSMEQRTNQEQDGDCFSRKSNENQILGRRSLRRAAEKVVSYKEMPLNVKMRRP.

4 disordered regions span residues 1–53 (MTST…KPNA), 189–226 (VESQSAVSSNTVCQEPPQDGKQKRMPQRRRSSRLNQGS), 322–356 (NSKQNHLTGSQSSLSFNTVDTPEPPEDNTVKRCSK), and 422–442 (VSMEQRTNQEQDGDCFSRKSN). Polar residues-rich tracts occupy residues 12-22 (GSLNPPHSNPS) and 190-201 (ESQSAVSSNTVC). Residues 211–220 (KRMPQRRRSS) are compositionally biased toward basic residues. Polar residues-rich tracts occupy residues 322–341 (NSKQNHLTGSQSSLSFNTVD) and 422–431 (VSMEQRTNQE).

It belongs to the shugoshin family. Highly expressed in tissues containing meiocytes. Expressed at much lower level in leaves and pollen-containing flowers.

The protein localises to the nucleus. Its subcellular location is the chromosome. It localises to the centromere. Functionally, plays a central role in chromosome cohesion during meiosis I by preventing premature dissociation of cohesin complex from centromeres after prophase, when most of cohesin complex dissociates from chromosomes arms. Required for maintenance of centromeric cohesion before prophase II and correct segregation of chromatids during meiosis II. Has apparently no function in mitosis. The chain is Shugoshin-1 from Zea mays (Maize).